The primary structure comprises 201 residues: Small ribosomal subunit protein uS4 (201 aa).

The 67-residue stretch at 91 to 157 (SRLDNVVYRA…LPFQVARETV (67 aa)) folds into the S4 RNA-binding domain.

Belongs to the universal ribosomal protein uS4 family. As to quaternary structure, part of the 30S ribosomal subunit. Contacts protein S5. The interaction surface between S4 and S5 is involved in control of translational fidelity.

Its function is as follows. One of the primary rRNA binding proteins, it binds directly to 16S rRNA where it nucleates assembly of the body of the 30S subunit. In terms of biological role, with S5 and S12 plays an important role in translational accuracy. The protein is Small ribosomal subunit protein uS4 of Rhodococcus erythropolis (strain PR4 / NBRC 100887).